Here is a 284-residue protein sequence, read N- to C-terminus: Diaminopimelate epimerase (284 aa).

Substrate is bound by residues Asn-13 and Asn-70. Cys-79 serves as the catalytic Proton donor. Residues 80–81, Asn-167, Asn-200, and 218–219 contribute to the substrate site; these read GN and ER. Catalysis depends on Cys-227, which acts as the Proton acceptor. 228–229 contributes to the substrate binding site; it reads GT.

This sequence belongs to the diaminopimelate epimerase family. In terms of assembly, homodimer.

Its subcellular location is the cytoplasm. The enzyme catalyses (2S,6S)-2,6-diaminopimelate = meso-2,6-diaminopimelate. The protein operates within amino-acid biosynthesis; L-lysine biosynthesis via DAP pathway; DL-2,6-diaminopimelate from LL-2,6-diaminopimelate: step 1/1. Functionally, catalyzes the stereoinversion of LL-2,6-diaminopimelate (L,L-DAP) to meso-diaminopimelate (meso-DAP), a precursor of L-lysine and an essential component of the bacterial peptidoglycan. This is Diaminopimelate epimerase from Prochlorococcus marinus (strain NATL2A).